Consider the following 320-residue polypeptide: Ribose-phosphate pyrophosphokinase 3 (320 aa).

4 residues coordinate Mg(2+): Asp131, His133, Asp142, and Asp146.

Belongs to the ribose-phosphate pyrophosphokinase family.

Its subcellular location is the cytoplasm. It carries out the reaction D-ribose 5-phosphate + ATP = 5-phospho-alpha-D-ribose 1-diphosphate + AMP + H(+). Its pathway is metabolic intermediate biosynthesis; 5-phospho-alpha-D-ribose 1-diphosphate biosynthesis; 5-phospho-alpha-D-ribose 1-diphosphate from D-ribose 5-phosphate (route I): step 1/1. Its function is as follows. 5-phosphoribose 1-diphosphate synthase involved in nucleotide, histidine, and tryptophan biosynthesis. Active in heteromultimeric complexes with other 5-phosphoribose 1-diphosphate synthases (PRS2, PRS3, PRS4 and PRS5). This is Ribose-phosphate pyrophosphokinase 3 (PRS3) from Saccharomyces cerevisiae (strain ATCC 204508 / S288c) (Baker's yeast).